A 109-amino-acid polypeptide reads, in one-letter code: Parvalbumin beta (109 aa).

2 consecutive EF-hand domains span residues 38-73 (KSKD…FDGK) and 77-109 (LTDK…VTKG). The Ca(2+) site is built by D51, D53, S55, Y57, E59, E62, D90, D92, D94, K96, and E101.

The protein belongs to the parvalbumin family.

Its function is as follows. In muscle, parvalbumin is thought to be involved in relaxation after contraction. It binds two calcium ions. The polypeptide is Parvalbumin beta (Boa constrictor (Boa)).